The primary structure comprises 177 residues: Large ribosomal subunit protein uL6 (177 aa).

The protein belongs to the universal ribosomal protein uL6 family. As to quaternary structure, part of the 50S ribosomal subunit.

Its function is as follows. This protein binds to the 23S rRNA, and is important in its secondary structure. It is located near the subunit interface in the base of the L7/L12 stalk, and near the tRNA binding site of the peptidyltransferase center. This chain is Large ribosomal subunit protein uL6, found in Marinomonas sp. (strain MWYL1).